We begin with the raw amino-acid sequence, 44 residues long: Cuticle protein CP459 (44 aa).

2 tandem repeats follow at residues 3-20 (LLKGPSGVLFEDGQKRLL) and 27-44 (VLLTESGAVLSNGENVQF).

Calcified shell.

This Cancer pagurus (Rock crab) protein is Cuticle protein CP459.